The primary structure comprises 2108 residues: Mucin-5B (2108 aa).

The N-terminal stretch at M1–G21 is a signal peptide. A VWFD 1 domain is found at S36–P203. Intrachain disulfides connect C38/C166 and C60/C202. The interval E196–D219 is disordered. The TIL 1 domain maps to C304–C360. N381 carries N-linked (GlcNAc...) (complex) asparagine glycosylation. A VWFD 2 domain is found at G398 to F570. 3 cysteine pairs are disulfide-bonded: C400-C534, C422-C569, and C443-C451. Residues N528, N599, N680, and N772 are each glycosylated (N-linked (GlcNAc...) (complex) asparagine). The 58-residue stretch at C666–C723 folds into the TIL 2 domain. Positions G782 to C825 constitute a TIL 3 domain. Residues C825–P897 enclose the VWFC 1 domain. N-linked (GlcNAc...) (complex) asparagine glycosylation is present at N855. Residues G863–S1033 form the VWFD 3 domain. Disulfide bonds link C865/C997, C887/C1032, C896/C994, and C914/C921. N-linked (GlcNAc...) (complex) asparagine glycans are attached at residues N1036, N1219, N1371, and N1452. Positions C1429 to N1613 constitute a VWFD 4 domain. Disulfide bonds link C1431-C1573, C1453-C1612, and C1477-C1485. 5 N-linked (GlcNAc...) (complex) asparagine glycosylation sites follow: N1567, N1639, N1792, N1807, and N1841. The VWFC 2 domain occupies C1761–E1832. One can recognise a VWFC 3 domain in the interval G1870–Q1937. N1964 carries N-linked (GlcNAc...) (complex) asparagine glycosylation. 4 cysteine pairs are disulfide-bonded: C2010–C2066, C2031–C2080, C2042–C2096, and C2046–C2098. Positions C2010–P2104 constitute a CTCK domain.

Homomultimer; disulfide-linked. The N- and C-terminus mediate their assembly into higher order structures to form filaments. The CTCK domains of two polypeptides associate in the endoplasmic reticulum to generate intermolecularly disulfide-bonded dimers. These dimers progress to the Golgi apparatus, which is a more acidic environment than the endoplasmic reticulum. Under acidic conditions, the N-termini form non-covalent intermolecular interactions that juxtapose assemblies from different CTCK-linked dimers to produce long, disulfide-linked polymers that remain highly compact until secretion. N-glycosylated. Complex glycosylation with bisecting N-acetylglucosamine. Contains mainly N-acetylglucosamine (3.1-8.5%), mannose (2.9-4.6%), a small amount of galactose (1.1-4.35) and sialic acid (0.3-1.3%). Most abundant glycan is composed of a GlcNAc(2)Man(3) core, a bisecting GlcNAc and another 3 GlcNAc antannae located on the mannoses of the core. Site Asn-1639 exists both in glycosylated and non-glycosylated forms.

The protein localises to the secreted. In terms of biological role, ovomucin, the glycoprotein responsible for the gel properties of egg white, is composed for 2 subunits, alpha-ovomucin/MUC5B and beta-ovomucin/MUC6. This Gallus gallus (Chicken) protein is Mucin-5B (MUC5B).